The chain runs to 1507 residues: DNA-directed RNA polymerase subunit beta' (1507 aa).

Residues cysteine 71, cysteine 73, cysteine 86, and cysteine 89 each contribute to the Zn(2+) site. Residues aspartate 470, aspartate 472, and aspartate 474 each contribute to the Mg(2+) site. Positions 800, 874, 881, and 884 each coordinate Zn(2+).

The protein belongs to the RNA polymerase beta' chain family. As to quaternary structure, the RNAP catalytic core consists of 2 alpha, 1 beta, 1 beta' and 1 omega subunit. When a sigma factor is associated with the core the holoenzyme is formed, which can initiate transcription. The cofactor is Mg(2+). Zn(2+) serves as cofactor.

It carries out the reaction RNA(n) + a ribonucleoside 5'-triphosphate = RNA(n+1) + diphosphate. Its function is as follows. DNA-dependent RNA polymerase catalyzes the transcription of DNA into RNA using the four ribonucleoside triphosphates as substrates. The polypeptide is DNA-directed RNA polymerase subunit beta' (Nitratiruptor sp. (strain SB155-2)).